Here is a 282-residue protein sequence, read N- to C-terminus: Pantothenate synthetase (282 aa).

30-37 (MGYLHEGH) lines the ATP pocket. Catalysis depends on H37, which acts as the Proton donor. Q61 is a binding site for (R)-pantoate. A beta-alanine-binding site is contributed by Q61. 147 to 150 (GQKD) is a binding site for ATP. Residue Q153 coordinates (R)-pantoate. ATP contacts are provided by residues V176 and 184 to 187 (LSSR).

It belongs to the pantothenate synthetase family. Homodimer.

The protein resides in the cytoplasm. The enzyme catalyses (R)-pantoate + beta-alanine + ATP = (R)-pantothenate + AMP + diphosphate + H(+). The protein operates within cofactor biosynthesis; (R)-pantothenate biosynthesis; (R)-pantothenate from (R)-pantoate and beta-alanine: step 1/1. In terms of biological role, catalyzes the condensation of pantoate with beta-alanine in an ATP-dependent reaction via a pantoyl-adenylate intermediate. This chain is Pantothenate synthetase, found in Desulfitobacterium hafniense (strain DSM 10664 / DCB-2).